A 407-amino-acid chain; its full sequence is Betaine--homocysteine S-methyltransferase 1 (407 aa).

In terms of domain architecture, Hcy-binding spans 11-314 (KGILERLNAG…YHIRAIAEEL (304 aa)). Residues lysine 40, lysine 93, and lysine 98 each carry the N6-succinyllysine modification. Cysteine 217 is a Zn(2+) binding site. 2 positions are modified to N6-succinyllysine: lysine 232 and lysine 241. 2 residues coordinate Zn(2+): cysteine 299 and cysteine 300. Position 330 is a phosphoserine (serine 330). 2 positions are modified to N6-succinyllysine: lysine 340 and lysine 377.

As to quaternary structure, homotetramer. Zn(2+) serves as cofactor.

The protein resides in the cytoplasm. It localises to the cytosol. Its subcellular location is the nucleus. It carries out the reaction L-homocysteine + glycine betaine = N,N-dimethylglycine + L-methionine. It participates in amine and polyamine degradation; betaine degradation; sarcosine from betaine: step 1/2. The protein operates within amino-acid biosynthesis; L-methionine biosynthesis via de novo pathway; L-methionine from L-homocysteine (BhmT route): step 1/1. Involved in the regulation of homocysteine metabolism. Converts betaine and homocysteine to dimethylglycine and methionine, respectively. This reaction is also required for the irreversible oxidation of choline. The polypeptide is Betaine--homocysteine S-methyltransferase 1 (Bhmt) (Mus musculus (Mouse)).